The chain runs to 192 residues: Fe/S biogenesis protein NfuA (192 aa).

Residues Cys-149 and Cys-152 each contribute to the [4Fe-4S] cluster site.

It belongs to the NfuA family. In terms of assembly, homodimer. Requires [4Fe-4S] cluster as cofactor.

In terms of biological role, involved in iron-sulfur cluster biogenesis. Binds a 4Fe-4S cluster, can transfer this cluster to apoproteins, and thereby intervenes in the maturation of Fe/S proteins. Could also act as a scaffold/chaperone for damaged Fe/S proteins. The protein is Fe/S biogenesis protein NfuA of Idiomarina loihiensis (strain ATCC BAA-735 / DSM 15497 / L2-TR).